We begin with the raw amino-acid sequence, 164 residues long: ATP synthase B' chain, cyanelle (164 aa).

Residues Ala26–Phe46 form a helical membrane-spanning segment.

This sequence belongs to the ATPase B chain family. F-type ATPases have 2 components, F(1) - the catalytic core - and F(0) - the membrane proton channel. F(1) has five subunits: alpha(3), beta(3), gamma(1), delta(1), epsilon(1). F(0) has four main subunits: a(1), b(1), b'(1) and c(10-14). The alpha and beta chains form an alternating ring which encloses part of the gamma chain. F(1) is attached to F(0) by a central stalk formed by the gamma and epsilon chains, while a peripheral stalk is formed by the delta, b and b' chains.

The protein resides in the plastid. The protein localises to the cyanelle thylakoid membrane. In terms of biological role, f(1)F(0) ATP synthase produces ATP from ADP in the presence of a proton or sodium gradient. F-type ATPases consist of two structural domains, F(1) containing the extramembraneous catalytic core and F(0) containing the membrane proton channel, linked together by a central stalk and a peripheral stalk. During catalysis, ATP synthesis in the catalytic domain of F(1) is coupled via a rotary mechanism of the central stalk subunits to proton translocation. Component of the F(0) channel, it forms part of the peripheral stalk, linking F(1) to F(0). The b'-subunit is a diverged and duplicated form of b found in plants and photosynthetic bacteria. The chain is ATP synthase B' chain, cyanelle from Cyanophora paradoxa.